The following is a 623-amino-acid chain: Frizzled and smoothened-like protein M (623 aa).

An N-terminal signal peptide occupies residues 1 to 18 (MKSIFIIIFILYVFQVNS). The Extracellular segment spans residues 19–243 (QTIYPIDPSG…WDQLYNLSNT (225 aa)). One can recognise an FZ domain in the interval 25 to 163 (DPSGKCEQYI…NYSEFNLTNY (139 aa)). 2 cysteine pairs are disulfide-bonded: Cys-30–Cys-100 and Cys-42–Cys-93. N-linked (GlcNAc...) asparagine glycans are attached at residues Asn-57, Asn-106, Asn-109, Asn-154, Asn-159, Asn-169, Asn-199, and Asn-239. A helical membrane pass occupies residues 244–264 (LAVLSTFGSLYLLVTFIILNP). The Cytoplasmic portion of the chain corresponds to 265-273 (KVTSFDRMY). Residues 274–294 (GFFNGSVFMMSLSGVILFIAG) form a helical membrane-spanning segment. Residues 295–317 (GPRALIKDGGARISVFEDPLCSS) are Extracellular-facing. Residues 318–338 (TGFIFQLFAINAILFWAYMGF) traverse the membrane as a helical segment. Topologically, residues 339–354 (DLWWRVKYITKPLNIQ) are cytoplasmic. The chain crosses the membrane as a helical span at residues 355–375 (KYYVPIAFTISFIFSVIPLAT). The Extracellular portion of the chain corresponds to 376–397 (KNYRMVRGNIHCWVHKAVLQNT). A helical membrane pass occupies residues 398–418 (LFFGPLGLTLTISTGFIGLVI). Residues 419–439 (YEIYKIVKATGRGGIMKLEIK) are Cytoplasmic-facing. A helical transmembrane segment spans residues 440 to 460 (PILNIVLIYFSFVYIFAFNFH). Residues 461–494 (NDNNSKNTYGSIDEFFQCTLESDDPSKCTVGGPS) are Extracellular-facing. Asn-463 carries N-linked (GlcNAc...) asparagine glycosylation. A helical transmembrane segment spans residues 495 to 515 (IGSLGYFIYCIRIYGIYCFFL). Topologically, residues 516 to 623 (QGLNERAFKI…DIEIGSVNIK (108 aa)) are cytoplasmic. A disordered region spans residues 552–590 (PSESGNSSTTAGTSTTINNSNINKKNNNSKPTLSTMDSN). The segment covering 555-580 (SGNSSTTAGTSTTINNSNINKKNNNS) has biased composition (low complexity).

The protein belongs to the G-protein coupled receptor Fz/Smo family.

The protein resides in the membrane. This Dictyostelium discoideum (Social amoeba) protein is Frizzled and smoothened-like protein M (fslM-1).